Reading from the N-terminus, the 205-residue chain is SCO2-like protein RP587 (205 aa).

Residues cysteine 82, cysteine 86, and histidine 172 each contribute to the Cu cation site.

It belongs to the SCO1/2 family.

This Rickettsia prowazekii (strain Madrid E) protein is SCO2-like protein RP587.